A 132-amino-acid polypeptide reads, in one-letter code: Bleomycin resistance protein (132 aa).

Residues 1-129 (MLQSIPALPV…DNNLISFFQQ (129 aa)) enclose the VOC domain.

This sequence belongs to the bleomycin resistance protein family.

In terms of biological role, binding protein with a strong affinity to the bleomycin family of antibiotics. The chain is Bleomycin resistance protein (bleO) from Geobacillus stearothermophilus (Bacillus stearothermophilus).